Consider the following 193-residue polypeptide: Holliday junction branch migration complex subunit RuvA (193 aa).

The tract at residues 1 to 63 (MYAYLKGKIM…EDAQLLYGFK (63 aa)) is domain I. Residues 64-141 (DEEEKAMFNA…TITDESELFK (78 aa)) are domain II. The interval 141–142 (KE) is flexible linker. Residues 143-193 (VNDTLLNEALLAFEALGYSKREITKIEKELKKKQFSTVDEYVKQGLQMFVS) are domain III.

The protein belongs to the RuvA family. In terms of assembly, homotetramer. Forms an RuvA(8)-RuvB(12)-Holliday junction (HJ) complex. HJ DNA is sandwiched between 2 RuvA tetramers; dsDNA enters through RuvA and exits via RuvB. An RuvB hexamer assembles on each DNA strand where it exits the tetramer. Each RuvB hexamer is contacted by two RuvA subunits (via domain III) on 2 adjacent RuvB subunits; this complex drives branch migration. In the full resolvosome a probable DNA-RuvA(4)-RuvB(12)-RuvC(2) complex forms which resolves the HJ.

The protein localises to the cytoplasm. Functionally, the RuvA-RuvB-RuvC complex processes Holliday junction (HJ) DNA during genetic recombination and DNA repair, while the RuvA-RuvB complex plays an important role in the rescue of blocked DNA replication forks via replication fork reversal (RFR). RuvA specifically binds to HJ cruciform DNA, conferring on it an open structure. The RuvB hexamer acts as an ATP-dependent pump, pulling dsDNA into and through the RuvAB complex. HJ branch migration allows RuvC to scan DNA until it finds its consensus sequence, where it cleaves and resolves the cruciform DNA. The sequence is that of Holliday junction branch migration complex subunit RuvA from Macrococcus caseolyticus (strain JCSC5402) (Macrococcoides caseolyticum).